A 296-amino-acid polypeptide reads, in one-letter code: Diaminopimelate epimerase (296 aa).

Positions 11 and 78 each coordinate substrate. Residue cysteine 87 is the Proton donor of the active site. Substrate contacts are provided by residues 88-89 (GN), asparagine 167, asparagine 203, and 221-222 (ER). The active-site Proton acceptor is the cysteine 230. Position 231–232 (231–232 (GT)) interacts with substrate.

The protein belongs to the diaminopimelate epimerase family. In terms of assembly, homodimer.

It localises to the cytoplasm. It carries out the reaction (2S,6S)-2,6-diaminopimelate = meso-2,6-diaminopimelate. It participates in amino-acid biosynthesis; L-lysine biosynthesis via DAP pathway; DL-2,6-diaminopimelate from LL-2,6-diaminopimelate: step 1/1. In terms of biological role, catalyzes the stereoinversion of LL-2,6-diaminopimelate (L,L-DAP) to meso-diaminopimelate (meso-DAP), a precursor of L-lysine and an essential component of the bacterial peptidoglycan. In Mycobacterium leprae (strain Br4923), this protein is Diaminopimelate epimerase.